The following is a 432-amino-acid chain: Proline--tRNA ligase (432 aa).

The protein belongs to the class-II aminoacyl-tRNA synthetase family. ProS type 2 subfamily. In terms of assembly, homodimer.

Its subcellular location is the cytoplasm. The enzyme catalyses tRNA(Pro) + L-proline + ATP = L-prolyl-tRNA(Pro) + AMP + diphosphate. Functionally, catalyzes the attachment of proline to tRNA(Pro) in a two-step reaction: proline is first activated by ATP to form Pro-AMP and then transferred to the acceptor end of tRNA(Pro). This Rickettsia prowazekii (strain Madrid E) protein is Proline--tRNA ligase.